Here is an 878-residue protein sequence, read N- to C-terminus: Microtubule-associated protein homolog maph-1.1 (878 aa).

Disordered regions lie at residues 224 to 425 (ALSD…AQAT) and 456 to 518 (EIPP…PVVP). Low complexity-rich tracts occupy residues 241–268 (PSAR…APRA), 278–293 (SRPT…PRTA), 310–321 (APTRAPVPARSA), and 328–339 (APAKPAANTAKA). Basic and acidic residues-rich tracts occupy residues 416–425 (PPRHEVAQAT) and 480–496 (EEDK…KPDP).

Belongs to the MAP1A/MAP1B/MAP1S family. As to quaternary structure, interacts with dlg-1.

Its subcellular location is the cell projection. The protein resides in the dendrite. It is found in the perikaryon. The protein localises to the axon. It localises to the cytoplasm. Its subcellular location is the cytoskeleton. The polypeptide is Microtubule-associated protein homolog maph-1.1 (Caenorhabditis elegans).